Here is a 165-residue protein sequence, read N- to C-terminus: Crossover junction endodeoxyribonuclease RuvC (165 aa).

Active-site residues include aspartate 7, glutamate 67, and aspartate 140. Residues aspartate 7, glutamate 67, and aspartate 140 each coordinate Mg(2+).

The protein belongs to the RuvC family. In terms of assembly, homodimer which binds Holliday junction (HJ) DNA. The HJ becomes 2-fold symmetrical on binding to RuvC with unstacked arms; it has a different conformation from HJ DNA in complex with RuvA. In the full resolvosome a probable DNA-RuvA(4)-RuvB(12)-RuvC(2) complex forms which resolves the HJ. Mg(2+) is required as a cofactor.

Its subcellular location is the cytoplasm. It carries out the reaction Endonucleolytic cleavage at a junction such as a reciprocal single-stranded crossover between two homologous DNA duplexes (Holliday junction).. The RuvA-RuvB-RuvC complex processes Holliday junction (HJ) DNA during genetic recombination and DNA repair. Endonuclease that resolves HJ intermediates. Cleaves cruciform DNA by making single-stranded nicks across the HJ at symmetrical positions within the homologous arms, yielding a 5'-phosphate and a 3'-hydroxyl group; requires a central core of homology in the junction. The consensus cleavage sequence is 5'-(A/T)TT(C/G)-3'. Cleavage occurs on the 3'-side of the TT dinucleotide at the point of strand exchange. HJ branch migration catalyzed by RuvA-RuvB allows RuvC to scan DNA until it finds its consensus sequence, where it cleaves and resolves the cruciform DNA. This is Crossover junction endodeoxyribonuclease RuvC from Thermotoga petrophila (strain ATCC BAA-488 / DSM 13995 / JCM 10881 / RKU-1).